The primary structure comprises 121 residues: Non-structural protein 8 (121 aa).

The signal sequence occupies residues 1–15 (MKLLIVFGLLASVYC). The region spanning 19 to 121 (ECSIQECCEN…HDVRVVLDFI (103 aa)) is the SARS ORF8 Ig-like domain. Intrachain disulfides connect Cys-25/Cys-90, Cys-37/Cys-102, and Cys-61/Cys-83.

The chain is Non-structural protein 8 from Bat coronavirus HKU3 (BtCoV).